The following is a 330-amino-acid chain: uncharacterized protein (330 aa).

Disordered regions lie at residues 136–160 and 172–314; these read VPPS…DESS and DNEK…SQFN. Over residues 223 to 235 the composition is skewed to pro residues; that stretch reads PKPPAPPPPPPVP. Over residues 236 to 246 the composition is skewed to low complexity; sequence ISMTPAAISVT. 3 stretches are compositionally biased toward polar residues: residues 263–276, 284–294, and 304–314; these read AQST…TTDE, TRSSSQSNSTV, and PASSPTFSQFN.

This is an uncharacterized protein from Danio rerio (Zebrafish).